The following is a 207-amino-acid chain: MKLRGLYAITDSQLLAGRFLTHVEAALEGGVRLLQYRDKSDDAARRLREAQALQKLCERYGTELVINDDAELAARLGVGVHLGQTDGPLTPARALLGRQAIIGSTCHASLDLAAQAASEGASYVAFGRFFNSVTKPGAPAADVGLLAQARGQVKLPIAVIGGITLDNAAPLVAHGADLLAVIHGLFGADSAQEVTRRARAFNALFAS.

4-amino-2-methyl-5-(diphosphooxymethyl)pyrimidine is bound by residues 35–39 (QYRDK) and N67. Mg(2+) is bound by residues D68 and D86. T105 lines the 4-amino-2-methyl-5-(diphosphooxymethyl)pyrimidine pocket. Position 132-134 (132-134 (SVT)) interacts with 2-[(2R,5Z)-2-carboxy-4-methylthiazol-5(2H)-ylidene]ethyl phosphate. Residue K135 coordinates 4-amino-2-methyl-5-(diphosphooxymethyl)pyrimidine. 2-[(2R,5Z)-2-carboxy-4-methylthiazol-5(2H)-ylidene]ethyl phosphate is bound at residue G162.

The protein belongs to the thiamine-phosphate synthase family. The cofactor is Mg(2+).

The enzyme catalyses 2-[(2R,5Z)-2-carboxy-4-methylthiazol-5(2H)-ylidene]ethyl phosphate + 4-amino-2-methyl-5-(diphosphooxymethyl)pyrimidine + 2 H(+) = thiamine phosphate + CO2 + diphosphate. It carries out the reaction 2-(2-carboxy-4-methylthiazol-5-yl)ethyl phosphate + 4-amino-2-methyl-5-(diphosphooxymethyl)pyrimidine + 2 H(+) = thiamine phosphate + CO2 + diphosphate. It catalyses the reaction 4-methyl-5-(2-phosphooxyethyl)-thiazole + 4-amino-2-methyl-5-(diphosphooxymethyl)pyrimidine + H(+) = thiamine phosphate + diphosphate. Its pathway is cofactor biosynthesis; thiamine diphosphate biosynthesis; thiamine phosphate from 4-amino-2-methyl-5-diphosphomethylpyrimidine and 4-methyl-5-(2-phosphoethyl)-thiazole: step 1/1. Condenses 4-methyl-5-(beta-hydroxyethyl)thiazole monophosphate (THZ-P) and 2-methyl-4-amino-5-hydroxymethyl pyrimidine pyrophosphate (HMP-PP) to form thiamine monophosphate (TMP). In Pseudomonas putida (strain W619), this protein is Thiamine-phosphate synthase.